A 302-amino-acid polypeptide reads, in one-letter code: Heme A synthase (302 aa).

The Cytoplasmic segment spans residues Met1 to Lys8. A helical membrane pass occupies residues Trp9–Thr29. Topologically, residues Lys30 to Ser67 are extracellular. A disulfide bridge links Cys37 with Cys44. Residue Glu60 is part of the active site. Residue His63 coordinates heme o. Residues Gly68–Ile88 traverse the membrane as a helical segment. Topologically, residues Lys89–Pro93 are cytoplasmic. A helical transmembrane segment spans residues Leu94–Met114. Residues Trp115 to Leu122 are Extracellular-facing. The chain crosses the membrane as a helical span at residues Ala123–Ile143. A heme o-binding site is contributed by His125. Over Tyr144 to Leu161 the chain is Cytoplasmic. Residues Arg162–Val182 traverse the membrane as a helical segment. Over Arg183–Arg215 the chain is Extracellular. His214 is a heme b binding site. Residues Gly216–Tyr236 form a helical membrane-spanning segment. The Cytoplasmic portion of the chain corresponds to Arg237 to Tyr244. Residues Gly245 to Ile265 form a helical membrane-spanning segment. Topologically, residues Thr266–Phe271 are extracellular. The chain crosses the membrane as a helical span at residues Ile272–Ile292. His276 is a heme b binding site. The Cytoplasmic portion of the chain corresponds to Leu293–Gly302.

Belongs to the COX15/CtaA family. Type 1 subfamily. In terms of assembly, interacts with CtaB. Heme b serves as cofactor.

It is found in the cell membrane. It catalyses the reaction Fe(II)-heme o + 2 A + H2O = Fe(II)-heme a + 2 AH2. It functions in the pathway porphyrin-containing compound metabolism; heme A biosynthesis; heme A from heme O: step 1/1. Catalyzes the conversion of heme O to heme A by two successive hydroxylations of the methyl group at C8. The first hydroxylation forms heme I, the second hydroxylation results in an unstable dihydroxymethyl group, which spontaneously dehydrates, resulting in the formyl group of heme A. The sequence is that of Heme A synthase from Staphylococcus saprophyticus subsp. saprophyticus (strain ATCC 15305 / DSM 20229 / NCIMB 8711 / NCTC 7292 / S-41).